The primary structure comprises 205 residues: MKEVEENFKLHSIPSCAAKEKMGATFSNESALHGTVLGHLLNLPNVNTEVLKAIYKMITVNGNQDKLSDIGISKFLTKWRTVYFSNKKPLIDALNNRFYDDVVNEEFEHFINKQNDNYMEARAEIGLLIELYHKDYLKSNFLNNDALEKLIILIIATDYMPMNFFPIFNYSCSTTDPSFKSHLLNSIQNLFLVGYEPILDKLLFI.

This is an uncharacterized protein from Caenorhabditis elegans.